The sequence spans 350 residues: Phosphoribosylformylglycinamidine cyclo-ligase (350 aa).

This sequence belongs to the AIR synthase family.

It is found in the cytoplasm. The enzyme catalyses 2-formamido-N(1)-(5-O-phospho-beta-D-ribosyl)acetamidine + ATP = 5-amino-1-(5-phospho-beta-D-ribosyl)imidazole + ADP + phosphate + H(+). The protein operates within purine metabolism; IMP biosynthesis via de novo pathway; 5-amino-1-(5-phospho-D-ribosyl)imidazole from N(2)-formyl-N(1)-(5-phospho-D-ribosyl)glycinamide: step 2/2. The protein is Phosphoribosylformylglycinamidine cyclo-ligase of Cupriavidus taiwanensis (strain DSM 17343 / BCRC 17206 / CCUG 44338 / CIP 107171 / LMG 19424 / R1) (Ralstonia taiwanensis (strain LMG 19424)).